The sequence spans 195 residues: 3-isopropylmalate dehydratase small subunit (195 aa).

Belongs to the LeuD family. LeuD type 1 subfamily. As to quaternary structure, heterodimer of LeuC and LeuD.

It carries out the reaction (2R,3S)-3-isopropylmalate = (2S)-2-isopropylmalate. The protein operates within amino-acid biosynthesis; L-leucine biosynthesis; L-leucine from 3-methyl-2-oxobutanoate: step 2/4. Functionally, catalyzes the isomerization between 2-isopropylmalate and 3-isopropylmalate, via the formation of 2-isopropylmaleate. The polypeptide is 3-isopropylmalate dehydratase small subunit (Frankia casuarinae (strain DSM 45818 / CECT 9043 / HFP020203 / CcI3)).